An 847-amino-acid chain; its full sequence is Glycogen phosphorylase, liver form (847 aa).

Ala2 is modified (N-acetylalanine). Ser15 bears the Phosphoserine; by PHK; in form phosphorylase a mark. AMP-binding positions include 43-45 (DRN), Tyr76, and Arg310. Lys364 carries the post-translational modification N6-succinyllysine. Lys470 carries the post-translational modification N6-acetyllysine. Phosphoserine is present on residues Ser524, Ser561, and Ser639. Lys681 is subject to N6-(pyridoxal phosphate)lysine. Lys796 carries the N6-acetyllysine modification.

This sequence belongs to the glycogen phosphorylase family. In terms of assembly, homodimer; enzymatically active. Interacts with PPP1R3B; recruits the phosphatase PP1 which dephosphorylates and inactivates PYGL/glycogen phosphorylase. The cofactor is pyridoxal 5'-phosphate. In terms of processing, acetylation, which is up-regulated by glucose and insulin and down-regulated by glucagon, inhibits the glycogen phosphorylase activity by promoting PPP1R3B-mediated recruitment of phosphatase PP1 and Ser-15 dephosphorylation. Phosphorylation at Ser-15 converts inactive phosphorylase b into active phosphorylase a. Dephosphorylation of Ser-15 by phosphatase PP1 inactivates the enzyme.

Its subcellular location is the cytoplasm. The protein resides in the cytosol. It carries out the reaction [(1-&gt;4)-alpha-D-glucosyl](n) + phosphate = [(1-&gt;4)-alpha-D-glucosyl](n-1) + alpha-D-glucose 1-phosphate. Allosterically regulated through the non-covalent binding of metabolites, being activated by AMP and inhibited by ATP, ADP, and glucose-6-phosphate. The activity is also controlled by post-translational modifications including phosphorylation and acetylation. Allosteric enzyme that catalyzes the rate-limiting step in glycogen catabolism, the phosphorolytic cleavage of glycogen to produce glucose-1-phosphate, and plays a central role in maintaining cellular and organismal glucose homeostasis. The chain is Glycogen phosphorylase, liver form from Homo sapiens (Human).